Reading from the N-terminus, the 384-residue chain is tRNA(Met) cytidine acetate ligase (384 aa).

ATP-binding positions include 7–20, Gly-101, Asn-153, and Arg-178; that span reads VAEY…HEFL.

It belongs to the TmcAL family.

The protein resides in the cytoplasm. The enzyme catalyses cytidine(34) in elongator tRNA(Met) + acetate + ATP = N(4)-acetylcytidine(34) in elongator tRNA(Met) + AMP + diphosphate. Catalyzes the formation of N(4)-acetylcytidine (ac(4)C) at the wobble position of elongator tRNA(Met), using acetate and ATP as substrates. First activates an acetate ion to form acetyladenylate (Ac-AMP) and then transfers the acetyl group to tRNA to form ac(4)C34. The polypeptide is tRNA(Met) cytidine acetate ligase (Lactobacillus delbrueckii subsp. bulgaricus (strain ATCC BAA-365 / Lb-18)).